The primary structure comprises 121 residues: Large ribosomal subunit protein bL12 (121 aa).

It belongs to the bacterial ribosomal protein bL12 family. As to quaternary structure, homodimer. Part of the ribosomal stalk of the 50S ribosomal subunit. Forms a multimeric L10(L12)X complex, where L10 forms an elongated spine to which 2 to 4 L12 dimers bind in a sequential fashion. Binds GTP-bound translation factors.

Its function is as follows. Forms part of the ribosomal stalk which helps the ribosome interact with GTP-bound translation factors. Is thus essential for accurate translation. This Limosilactobacillus fermentum (strain NBRC 3956 / LMG 18251) (Lactobacillus fermentum) protein is Large ribosomal subunit protein bL12.